We begin with the raw amino-acid sequence, 171 residues long: 3-hydroxydecanoyl-[acyl-carrier-protein] dehydratase (171 aa).

The active site involves His-70.

Belongs to the thioester dehydratase family. FabA subfamily. In terms of assembly, homodimer.

It is found in the cytoplasm. The catalysed reaction is a (3R)-hydroxyacyl-[ACP] = a (2E)-enoyl-[ACP] + H2O. It catalyses the reaction (3R)-hydroxydecanoyl-[ACP] = (2E)-decenoyl-[ACP] + H2O. The enzyme catalyses (2E)-decenoyl-[ACP] = (3Z)-decenoyl-[ACP]. It functions in the pathway lipid metabolism; fatty acid biosynthesis. Its function is as follows. Necessary for the introduction of cis unsaturation into fatty acids. Catalyzes the dehydration of (3R)-3-hydroxydecanoyl-ACP to E-(2)-decenoyl-ACP and then its isomerization to Z-(3)-decenoyl-ACP. Can catalyze the dehydratase reaction for beta-hydroxyacyl-ACPs with saturated chain lengths up to 16:0, being most active on intermediate chain length. The polypeptide is 3-hydroxydecanoyl-[acyl-carrier-protein] dehydratase (Shewanella woodyi (strain ATCC 51908 / MS32)).